We begin with the raw amino-acid sequence, 212 residues long: Cyclin-dependent kinase 2-interacting protein (212 aa).

At Met1 the chain carries N-acetylmethionine. 2 positions are modified to phosphoserine: Ser69 and Ser73. Positions 73 to 107 (SKENEEKVCLEYNEELEKLCEELQATLDGLTKIQV) form a coiled coil. Na(+) is bound at residue Ser202.

The protein belongs to the CINP family. In terms of assembly, homodimer. Part of the 55LCC heterohexameric ATPase complex composed at least of AIRIM, AFG2A, AFG2B and CINP. Interacts with AIRIM. Interacts with CDK2 and CDC7. Interacts with the components of the replication complex, MCM2, MCM3, MCM4, MCM5, MCM6, MCM7 and with ORC2-containing complexes. Interacts with ATRIP. Interacts with CEP152. Associates with pre-60S ribosomal particles. In terms of processing, phosphorylated by CDC7 but not by CDK2.

It is found in the nucleus. Functionally, component of the DNA replication complex, which interacts with two kinases, CDK2 and CDC7, thereby providing a functional and physical link between CDK2 and CDC7 during firing of the origins of replication. Regulates ATR-mediated checkpoint signaling in response to DNA damage. Part of the 55LCC heterohexameric ATPase complex which is chromatin-associated and promotes replisome proteostasis to maintain replication fork progression and genome stability. Required for replication fork progression, sister chromatid cohesion, and chromosome stability. The ATPase activity is specifically enhanced by replication fork DNA and is coupled to cysteine protease-dependent cleavage of replisome substrates in response to replication fork damage. Uses ATPase activity to process replisome substrates in S-phase, facilitating their proteolytic turnover from chromatin to ensure DNA replication and mitotic fidelity. As part of 55LCC complex, also involved in the cytoplasmic maturation steps of pre-60S ribosomal particles by promoting the release of shuttling protein RSL24D1/RLP24 from the pre-ribosomal particles. This Homo sapiens (Human) protein is Cyclin-dependent kinase 2-interacting protein.